Reading from the N-terminus, the 512-residue chain is tRNA modification GTPase gtpbp3, mitochondrial (512 aa).

Residues 246–434 (GANIAIVGPP…LLNLLKLNLK (189 aa)) form the TrmE-type G domain. GTP is bound by residues 253–260 (GPPNAGKS), 300–304 (DTAGL), and 375–378 (NKSD).

This sequence belongs to the TRAFAC class TrmE-Era-EngA-EngB-Septin-like GTPase superfamily. TrmE GTPase family.

The protein resides in the mitochondrion. In terms of biological role, GTPase involved in the 5-carboxymethylaminomethyl modification (mnm(5)s(2)U34) of the wobble uridine base in mitochondrial tRNAs. The protein is tRNA modification GTPase gtpbp3, mitochondrial (gtpbp3) of Dictyostelium discoideum (Social amoeba).